We begin with the raw amino-acid sequence, 188 residues long: Translation machinery-associated protein 22 (188 aa).

Residues 96–167 (VTIKRIERNK…EIEEFLLEKY (72 aa)) form the SUI1 domain.

It belongs to the DENR family. Interacts with the 40S ribosomal subunit.

It localises to the cytoplasm. The protein is Translation machinery-associated protein 22 (TMA22) of Chaetomium globosum (strain ATCC 6205 / CBS 148.51 / DSM 1962 / NBRC 6347 / NRRL 1970) (Soil fungus).